The sequence spans 225 residues: Tryptophan synthase beta chain (225 aa).

The protein belongs to the TrpB family. In terms of assembly, tetramer of two alpha and two beta chains. The cofactor is pyridoxal 5'-phosphate.

The catalysed reaction is (1S,2R)-1-C-(indol-3-yl)glycerol 3-phosphate + L-serine = D-glyceraldehyde 3-phosphate + L-tryptophan + H2O. The protein operates within amino-acid biosynthesis; L-tryptophan biosynthesis; L-tryptophan from chorismate: step 5/5. Functionally, the beta subunit is responsible for the synthesis of L-tryptophan from indole and L-serine. The sequence is that of Tryptophan synthase beta chain (trpB) from Buchnera aphidicola subsp. Rhopalosiphum padi.